A 203-amino-acid polypeptide reads, in one-letter code: SOSS complex subunit B1 (203 aa).

Positions 22–92 (IVLETGRVTK…TLYTGRGGDL (71 aa)) form a DNA-binding region, OB. Residues 111–203 (PNPEYIAQQS…GKEPRRTGKR (93 aa)) are disordered. Over residues 117–128 (AQQSQNKQAQAE) the composition is skewed to polar residues. Low complexity predominate over residues 129–140 (SGTGTNSHNSSS). Residues 149–182 (ENGNGSNSSGPPTHQSTAPTHSTSGRITRSQPNH) are compositionally biased toward polar residues.

The protein belongs to the SOSS-B family. SOSS-B1 subfamily. Component of the SOSS complex, composed of soss-b (soss-b1/nabp2 or soss-b2/nabp1), soss-a/ints3 and soss-c/inip. SOSS complexes containing soss-b1/nabp2 are more abundant than complexes containing soss-b2/nabp1.

It is found in the nucleus. In terms of biological role, component of the SOSS complex, a multiprotein complex that functions downstream of the MRN complex to promote DNA repair and G2/M checkpoint. In the SOSS complex, acts as a sensor of single-stranded DNA that binds to single-stranded DNA. The SOSS complex associates with DNA lesions and influences diverse endpoints in the cellular DNA damage response including cell-cycle checkpoint activation, recombinational repair and maintenance of genomic stability. Required for efficient homologous recombination-dependent repair of double-strand breaks (DSBs). This Xenopus tropicalis (Western clawed frog) protein is SOSS complex subunit B1 (nabp2).